We begin with the raw amino-acid sequence, 333 residues long: MTILINDSTLRDGQHAVKHQLTAAQLRSYATAADKTGVAIVEVGHGNGLGASSYQVGRAALSDEEMLTTVRESLQNSKMGVFMLPGWGTIADLTKALAYGTDVVRIGTHCTEATLAERHLGWLREQGAEAHAVLMMSHMASPAELADQAELLVGYGAQAVGIMDSAGSLLPQDVTARITAMRMQVKVPLIFHAHNNLGMAVANSLAAVQAGAGIIDGCARGFGAGAGNTQLEVLIPVLERLGFNTGIDLYHFLDAADLAARELMVVPPMIDSLGIVSGLAGVFSGFKSPVLNHAGSAGVDARDVFFELGRRQIIAGQEDLIVEVVAELKRAAS.

One can recognise a Pyruvate carboxyltransferase domain in the interval 3-253; it reads ILINDSTLRD…NTGIDLYHFL (251 aa). 11-12 contacts substrate; the sequence is RD. Position 12 (Asp-12) interacts with Mn(2+). The active-site Proton acceptor is His-15. Positions 165 and 192 each coordinate substrate. Mn(2+) is bound by residues His-192 and His-194.

This sequence belongs to the 4-hydroxy-2-oxovalerate aldolase family. As to quaternary structure, interacts with MhpF.

It catalyses the reaction (S)-4-hydroxy-2-oxopentanoate = acetaldehyde + pyruvate. The protein operates within aromatic compound metabolism; 3-phenylpropanoate degradation. Its function is as follows. Catalyzes the retro-aldol cleavage of 4-hydroxy-2-oxopentanoate to pyruvate and acetaldehyde. Is involved in the meta-cleavage pathway for the degradation of aromatic compounds. The protein is 4-hydroxy-2-oxovalerate aldolase of Serratia proteamaculans (strain 568).